A 412-amino-acid polypeptide reads, in one-letter code: Putative phosphate permease PF1020 (412 aa).

Transmembrane regions (helical) follow at residues 7–27, 50–70, 88–108, 119–139, 143–163, 187–207, 213–233, 298–318, 335–355, and 384–404; these read MLADPILLITILLGFAMAWAI, AVIIAGVLEFMGAYFFGKTVT, VLIFGSIAALIGATIWLVIAT, SIIGGIVGYGIVYGGMSIVNW, IKVVLSWILSPIVGAIFAYLV, FWIGLAFVVIGTMFYIKVLHG, GFLKYGMPAGILTFIVVSLIL, WILALGGLGIAIGVATYGYKV, FTIDFSAATVVLIASWLGMPI, and DIIISWFVTVPAAGVIAGIIF.

The protein belongs to the inorganic phosphate transporter (PiT) (TC 2.A.20) family.

Its subcellular location is the cell membrane. Its function is as follows. Potential transporter for phosphate. The polypeptide is Putative phosphate permease PF1020 (Pyrococcus furiosus (strain ATCC 43587 / DSM 3638 / JCM 8422 / Vc1)).